The sequence spans 359 residues: 4-galactosyl-N-acetylglucosaminide 3-alpha-L-fucosyltransferase 9 (359 aa).

The Cytoplasmic segment spans residues 1 to 11 (MTSTSKGILRP). The helical; Signal-anchor for type II membrane protein transmembrane segment at 12-32 (FLIVCIILGCFMACLLIYIKP) threads the bilayer. Residues 33–359 (TNSWVFSPME…VGNLEKWFWN (327 aa)) lie on the Lumenal side of the membrane. A glycan (N-linked (GlcNAc...) asparagine) is linked at asparagine 62. The interval 63–168 (ETTILVWVWP…RRDSDIQVPY (106 aa)) is acceptor-binding. Glutamine 75 lines the a beta-D-galactosyl-(1-&gt;4)-N-acetyl-beta-D-glucosaminyl derivative pocket. 3 cysteine pairs are disulfide-bonded: cysteine 82–cysteine 335, cysteine 91–cysteine 338, and cysteine 190–cysteine 238. N-linked (GlcNAc...) asparagine glycosylation occurs at asparagine 101. A beta-D-galactosyl-(1-&gt;4)-N-acetyl-beta-D-glucosaminyl derivative is bound at residue glutamate 137. The Nucleophile role is filled by glutamate 137. Position 137 (glutamate 137) interacts with GDP-beta-L-fucose. Asparagine 153 is a glycosylation site (N-linked (GlcNAc...) asparagine). Residues tyrosine 168, valine 192, serine 194, asparagine 195, arginine 202, valine 226, tyrosine 241, asparagine 246, tyrosine 252, glutamate 255, and lysine 256 each coordinate GDP-beta-L-fucose. Positions 169–326 (GFLTVSTNPF…NWRKDFTVNL (158 aa)) are donor-binding. Residues 327-359 (PRFWESHACLACDHVKRHQEYKSVGNLEKWFWN) are acceptor-binding.

This sequence belongs to the glycosyltransferase 10 family. In terms of assembly, homodimer. Post-translationally, N-glycosylated with complex-type N-glycans. In terms of tissue distribution, mainly detected in brain and kidney.

The protein resides in the golgi apparatus. It is found in the trans-Golgi network membrane. The protein localises to the golgi apparatus membrane. The enzyme catalyses a beta-D-galactosyl-(1-&gt;4)-N-acetyl-beta-D-glucosaminyl derivative + GDP-beta-L-fucose = a beta-D-galactosyl-(1-&gt;4)-[alpha-L-fucosyl-(1-&gt;3)]-N-acetyl-beta-D-glucosaminyl derivative + GDP + H(+). It catalyses the reaction an alpha-Neu5Ac-(2-&gt;3)-beta-D-Gal-(1-&gt;4)-beta-D-GlcNAc-(1-&gt;3)-beta-D-Gal-(1-&gt;4)-beta-D-GlcNAc derivative + GDP-beta-L-fucose = an alpha-Neu5Ac-(2-&gt;3)-beta-D-Gal-(1-&gt;4)-beta-D-GlcNAc-(1-&gt;3)-beta-D-Gal-(1-&gt;4)-[alpha-L-Fuc-(1-&gt;3)]-beta-D-GlcNAc derivative + GDP + H(+). It carries out the reaction alpha-N-glycoloylneuraminosyl-(2-&gt;3)-beta-D-galactosyl-(1-&gt;4)-N-acetyl-beta-D-glucosaminyl-(1-&gt;3)-beta-D-galactosyl-(1-&gt;4)-N-acetyl-beta-D-glucosaminyl-(1-&gt;3)-beta-D-galactosyl-(1-&gt;4)-beta-D-glucosyl-(1&lt;-&gt;1')-ceramide + GDP-beta-L-fucose = alpha-N-glycoloylneuraminosyl-(2-&gt;3)-beta-D-galactosyl-(1-&gt;4)-N-acetyl-beta-D-glucosaminyl-(1-&gt;3)-beta-D-galactosyl-(1-&gt;4)-[alpha-L-fucosyl-(1-&gt;3)]-N-acetyl-beta-D-glucosaminyl-(1-&gt;3)-beta-D-galactosyl-(1-&gt;4)-beta-D-glucosyl-(1&lt;-&gt;1')-ceramide + GDP + H(+). The catalysed reaction is alpha-D-galactosyl-(1-&gt;3)-beta-D-galactosyl-(1-&gt;4)-N-acetyl-beta-D-glucosaminyl-(1-&gt;3)-beta-D-galactosyl-(1-&gt;4)-beta-D-glucosyl-(1&lt;-&gt;1')-ceramide + GDP-beta-L-fucose = a neolactoside IV(3)-alpha-Gal,III(3)-alpha-Fuc-nLc4Cer + GDP + H(+). The enzyme catalyses a neolactoside nLc4Cer + GDP-beta-L-fucose = a neolactoside III(3)-alpha-Fuc-nLc4Cer + GDP + H(+). It catalyses the reaction an N-acetyl-alpha-neuraminyl-(2-&gt;3)-beta-D-galactosyl-(1-&gt;4)-N-acetyl-beta-D-glucosaminyl derivative + GDP-beta-L-fucose = an alpha-Neu5Ac-(2-&gt;3)-beta-D-Gal-(1-&gt;4)-[alpha-L-Fuc-(1-&gt;3)]-beta-D-GlcNAc derivative + GDP + H(+). It carries out the reaction beta-D-Gal-(1-&gt;4)-beta-D-GlcNAc-(1-&gt;3)-beta-D-Gal-(1-&gt;4)-D-Glc + GDP-beta-L-fucose = beta-D-Gal-(1-&gt;4)-[alpha-L-Fuc-(1-&gt;3)]-beta-D-GlcNAc-(1-&gt;3)-beta-D-Gal-(1-&gt;4)-D-Glc + GDP + H(+). The catalysed reaction is an alpha-L-Fuc-(1-&gt;2)-beta-D-Gal-(1-&gt;4)-beta-D-GlcNAc derivative + GDP-beta-L-fucose = an alpha-L-Fuc-(1-&gt;2)-beta-D-Gal-(1-&gt;4)-[alpha-L-Fuc-(1-&gt;3)]-beta-D-GlcNAc derivative + GDP + H(+). It functions in the pathway protein modification; protein glycosylation. It participates in glycolipid biosynthesis. Activated by Mn2+. Catalyzes alpha(1-&gt;3) linkage of fucosyl moiety transferred from GDP-beta-L-fucose to N-acetyl glucosamine (GlcNAc) within type 2 lactosamine (LacNAc, beta-D-Gal-(1-&gt;4)-beta-D-GlcNAc-) glycan attached to glycolipids and N- or O-linked glycoproteins. Fucosylates distal type 2 LacNAc and its fucosylated (H-type 2 LacNAc) and sialylated (sialyl-type 2 LacNAc) derivatives to form Lewis x (Lex) (CD15) and Lewis y (Ley) antigenic epitopes involved in cell adhesion and differentiation. Generates Lex epitopes in the brain, presumably playing a role in the maintenance of neuronal stemness and neurite outgrowth in progenitor neural cells. Fucosylates the internal type 2 LacNAc unit of the polylactosamine chain to form VIM-2 antigen that serves as recognition epitope for SELE. Can also modify milk oligosaccharides in particular type 2 tetrasaccharide LNnT. This chain is 4-galactosyl-N-acetylglucosaminide 3-alpha-L-fucosyltransferase 9, found in Mus musculus (Mouse).